Reading from the N-terminus, the 253-residue chain is Glucosamine-6-phosphate deaminase (253 aa).

Asp-67 functions as the Proton acceptor; for enolization step in the catalytic mechanism. Residue Asn-136 is the For ring-opening step of the active site. The active-site Proton acceptor; for ring-opening step is His-138. Catalysis depends on Glu-143, which acts as the For ring-opening step.

The protein belongs to the glucosamine/galactosamine-6-phosphate isomerase family. NagB subfamily.

The catalysed reaction is alpha-D-glucosamine 6-phosphate + H2O = beta-D-fructose 6-phosphate + NH4(+). It functions in the pathway amino-sugar metabolism; N-acetylneuraminate degradation; D-fructose 6-phosphate from N-acetylneuraminate: step 5/5. Its function is as follows. Catalyzes the reversible isomerization-deamination of glucosamine 6-phosphate (GlcN6P) to form fructose 6-phosphate (Fru6P) and ammonium ion. The polypeptide is Glucosamine-6-phosphate deaminase (Thermoanaerobacter sp. (strain X514)).